Consider the following 132-residue polypeptide: ATP synthase epsilon chain (132 aa).

The protein belongs to the ATPase epsilon chain family. As to quaternary structure, F-type ATPases have 2 components, CF(1) - the catalytic core - and CF(0) - the membrane proton channel. CF(1) has five subunits: alpha(3), beta(3), gamma(1), delta(1), epsilon(1). CF(0) has three main subunits: a, b and c.

It is found in the cell membrane. Functionally, produces ATP from ADP in the presence of a proton gradient across the membrane. This Desulfitobacterium hafniense (strain DSM 10664 / DCB-2) protein is ATP synthase epsilon chain.